The sequence spans 198 residues: dITP/XTP pyrophosphatase (198 aa).

10-15 contacts substrate; the sequence is SGSDHK. Positions 43 and 72 each coordinate Mg(2+). Catalysis depends on Asp-72, which acts as the Proton acceptor. Substrate is bound by residues Ser-73, 154–157, Lys-177, and 182–183; these read FGYD and HR.

This sequence belongs to the HAM1 NTPase family. As to quaternary structure, homodimer. The cofactor is Mg(2+).

The catalysed reaction is XTP + H2O = XMP + diphosphate + H(+). The enzyme catalyses dITP + H2O = dIMP + diphosphate + H(+). It carries out the reaction ITP + H2O = IMP + diphosphate + H(+). Its function is as follows. Pyrophosphatase that catalyzes the hydrolysis of nucleoside triphosphates to their monophosphate derivatives, with a high preference for the non-canonical purine nucleotides XTP (xanthosine triphosphate), dITP (deoxyinosine triphosphate) and ITP. Seems to function as a house-cleaning enzyme that removes non-canonical purine nucleotides from the nucleotide pool, thus preventing their incorporation into DNA/RNA and avoiding chromosomal lesions. This chain is dITP/XTP pyrophosphatase, found in Leptospira biflexa serovar Patoc (strain Patoc 1 / Ames).